Consider the following 213-residue polypeptide: mRNA-decapping protein D9 (213 aa).

One can recognise a Nudix hydrolase domain in the interval 30–209 (KDTHVFAACI…EYLSYIYNML (180 aa)). The short motif at 111–132 (GKLDKKESIKDCLRRELKEESD) is the Nudix box element. E117 provides a ligand contact to Mg(2+). The active-site Nucleophile is the E126. Residues E130 and D151 each coordinate Mg(2+).

Belongs to the Nudix hydrolase family. Mg(2+) is required as a cofactor. Mn(2+) serves as cofactor.

Decapping enzyme required for the removal of the 5'-end m7GpppN cap tethered to viral and host mRNAs to allow their decay in cells. May therefore accelerate viral and cellular mRNA turnover to eliminate competing host mRNAs and allow stage-specific synthesis of viral proteins. Acceleration of the turnover of cellular transcripts may even promote the shutoff of host protein synthesis. Does not cleave unmethylated RNAs or RNAs shorter than 24 nucleotides. The chain is mRNA-decapping protein D9 from Homo sapiens (Human).